The following is a 117-amino-acid chain: Large ribosomal subunit protein bL19 (117 aa).

The protein belongs to the bacterial ribosomal protein bL19 family.

This protein is located at the 30S-50S ribosomal subunit interface and may play a role in the structure and function of the aminoacyl-tRNA binding site. The chain is Large ribosomal subunit protein bL19 from Methylibium petroleiphilum (strain ATCC BAA-1232 / LMG 22953 / PM1).